Here is a 245-residue protein sequence, read N- to C-terminus: tRNA pseudouridine synthase A (245 aa).

The Nucleophile role is filled by Asp-52. Tyr-111 lines the substrate pocket.

The protein belongs to the tRNA pseudouridine synthase TruA family. In terms of assembly, homodimer.

It carries out the reaction uridine(38/39/40) in tRNA = pseudouridine(38/39/40) in tRNA. Its function is as follows. Formation of pseudouridine at positions 38, 39 and 40 in the anticodon stem and loop of transfer RNAs. In Rickettsia felis (strain ATCC VR-1525 / URRWXCal2) (Rickettsia azadi), this protein is tRNA pseudouridine synthase A.